The following is a 109-amino-acid chain: Cell division protein ZapA (109 aa).

A coiled-coil region spans residues 21–99 (PEQRDALNQA…IEQALLEQGR (79 aa)).

The protein belongs to the ZapA family. Type 1 subfamily. As to quaternary structure, homodimer. Interacts with FtsZ.

The protein resides in the cytoplasm. In terms of biological role, activator of cell division through the inhibition of FtsZ GTPase activity, therefore promoting FtsZ assembly into bundles of protofilaments necessary for the formation of the division Z ring. It is recruited early at mid-cell but it is not essential for cell division. The chain is Cell division protein ZapA from Klebsiella pneumoniae subsp. pneumoniae (strain ATCC 700721 / MGH 78578).